The chain runs to 181 residues: ATP synthase subunit b 2 (181 aa).

Over residues 1–18 the composition is skewed to low complexity; that stretch reads MATTTHDAGHGAAEAAHG. Residues 1–20 are disordered; it reads MATTTHDAGHGAAEAAHGSS. A helical membrane pass occupies residues 34 to 54; it reads IFWLLVTLVVIYLILSRIALP.

This sequence belongs to the ATPase B chain family. In terms of assembly, F-type ATPases have 2 components, F(1) - the catalytic core - and F(0) - the membrane proton channel. F(1) has five subunits: alpha(3), beta(3), gamma(1), delta(1), epsilon(1). F(0) has three main subunits: a(1), b(2) and c(10-14). The alpha and beta chains form an alternating ring which encloses part of the gamma chain. F(1) is attached to F(0) by a central stalk formed by the gamma and epsilon chains, while a peripheral stalk is formed by the delta and b chains.

Its subcellular location is the cell inner membrane. Its function is as follows. F(1)F(0) ATP synthase produces ATP from ADP in the presence of a proton or sodium gradient. F-type ATPases consist of two structural domains, F(1) containing the extramembraneous catalytic core and F(0) containing the membrane proton channel, linked together by a central stalk and a peripheral stalk. During catalysis, ATP synthesis in the catalytic domain of F(1) is coupled via a rotary mechanism of the central stalk subunits to proton translocation. Functionally, component of the F(0) channel, it forms part of the peripheral stalk, linking F(1) to F(0). The b'-subunit is a diverged and duplicated form of b found in plants and photosynthetic bacteria. In Ruegeria sp. (strain TM1040) (Silicibacter sp.), this protein is ATP synthase subunit b 2 (atpF2).